Consider the following 125-residue polypeptide: MTKSIGCDIIKVTRFNSFLQNRKKLDRFFTQREIENLEMKGKGILESLAGKFSAKEALIKALSPLINTKIKYSLKDIEIIALPKGNIIFQLHNDIKVLIEQMDLKLYLTISHEREYAIAFVIVED.

Mg(2+)-binding residues include Asp-8 and Glu-56.

It belongs to the P-Pant transferase superfamily. AcpS family. The cofactor is Mg(2+).

Its subcellular location is the cytoplasm. The enzyme catalyses apo-[ACP] + CoA = holo-[ACP] + adenosine 3',5'-bisphosphate + H(+). Its function is as follows. Transfers the 4'-phosphopantetheine moiety from coenzyme A to a Ser of acyl-carrier-protein. This chain is Holo-[acyl-carrier-protein] synthase, found in Borrelia hermsii (strain HS1 / DAH).